Consider the following 295-residue polypeptide: Epidermal growth factor-like protein 8 (295 aa).

Positions 1–25 (MGSRAELHTLLGGLSFLLLLMSGQG) are cleaved as a signal peptide. In terms of domain architecture, EMI spans 34-112 (SQGVCSRQTL…RHPGALTCDE (79 aa)). Intrachain disulfides connect Cys38/Cys97, Cys65/Cys71, Cys96/Cys110, Cys115/Cys125, Cys119/Cys131, Cys133/Cys142, Cys149/Cys160, Cys156/Cys169, and Cys171/Cys184. N-linked (GlcNAc...) asparagine glycosylation occurs at Asn50. In terms of domain architecture, EGF-like 1 spans 111 to 143 (DEAICAKPCQNGGVCVRPDQCECAPGWGGRHCH). Residues 145-185 (DVDECRTGVTLCSHRCHNTAGSFTCGCPHGLVLGPDGRTCA) form the EGF-like 2; calcium-binding domain. Residues 202–233 (VREAGREDRALRREIRELRGRLERLEQWAGQA) are a coiled coil.

Its subcellular location is the secreted. The protein is Epidermal growth factor-like protein 8 (EGFL8) of Sus scrofa (Pig).